Consider the following 393-residue polypeptide: Major outer membrane porin, serovar D (393 aa).

The signal sequence occupies residues 1-22; it reads MKKLLKSVLVFAALSSASSLQA.

It belongs to the chlamydial porin (CP) (TC 1.B.2) family. In terms of assembly, part of a disulfide cross-linked outer membrane complex (COMC) composed of the major outer membrane porin (MOMP), the small cysteine-rich protein (OmcA) and the large cysteine-rich periplasmic protein (OmcB).

Its subcellular location is the cell outer membrane. Functionally, in elementary bodies (EBs, the infectious stage, which is able to survive outside the host cell) provides the structural integrity of the outer envelope through disulfide cross-links with the small cysteine-rich protein and the large cysteine-rich periplasmic protein. It has been described in publications as the Sarkosyl-insoluble COMC (Chlamydia outer membrane complex), and serves as the functional equivalent of peptidoglycan. In terms of biological role, permits diffusion of specific solutes through the outer membrane. In Chlamydia trachomatis serovar D (strain ATCC VR-885 / DSM 19411 / UW-3/Cx), this protein is Major outer membrane porin, serovar D (ompA).